A 373-amino-acid chain; its full sequence is Pectin lyase D (373 aa).

The first 19 residues, 1 to 19 (MKYAAALTAIAALAARAAA), serve as a signal peptide directing secretion. Disulfide bonds link cysteine 82–cysteine 101 and cysteine 91–cysteine 225. N-linked (GlcNAc...) asparagine glycosylation is present at asparagine 128. Residue arginine 255 is part of the active site. Asparagine 274 is a glycosylation site (N-linked (GlcNAc...) asparagine). Residues cysteine 321 and cysteine 329 are joined by a disulfide bond. The N-linked (GlcNAc...) asparagine glycan is linked to asparagine 348. The span at 354-366 (LPSADAASTSPAS) shows a compositional bias: low complexity. The interval 354–373 (LPSADAASTSPASNAGQGNL) is disordered.

The protein belongs to the polysaccharide lyase 1 family. Post-translationally, may be O-glycosylated; does not contain N-acetylglucosamine.

The protein resides in the secreted. The enzyme catalyses Eliminative cleavage of (1-&gt;4)-alpha-D-galacturonan methyl ester to give oligosaccharides with 4-deoxy-6-O-methyl-alpha-D-galact-4-enuronosyl groups at their non-reducing ends.. Its function is as follows. Pectinolytic enzymes consist of four classes of enzymes: pectin lyase, polygalacturonase, pectin methylesterase and rhamnogalacturonase. Among pectinolytic enzymes, pectin lyase is the most important in depolymerization of pectin, since it cleaves internal glycosidic bonds of highly methylated pectins. This chain is Pectin lyase D (pelD), found in Aspergillus niger.